We begin with the raw amino-acid sequence, 524 residues long: Lysine--tRNA ligase (524 aa).

Positions 431 and 438 each coordinate Mg(2+).

The protein belongs to the class-II aminoacyl-tRNA synthetase family. As to quaternary structure, homodimer. Mg(2+) serves as cofactor.

Its subcellular location is the cytoplasm. It catalyses the reaction tRNA(Lys) + L-lysine + ATP = L-lysyl-tRNA(Lys) + AMP + diphosphate. The sequence is that of Lysine--tRNA ligase (lysS) from Chlamydia muridarum (strain MoPn / Nigg).